Reading from the N-terminus, the 191-residue chain is tRNA-specific adenosine deaminase 2 (191 aa).

One can recognise a CMP/dCMP-type deaminase domain in the interval 20–145; the sequence is EETEKWMEEA…SVLNIASADL (126 aa). Zn(2+) is bound at residue H71. Residue E73 is the Proton donor of the active site. Positions 107 and 110 each coordinate Zn(2+).

The protein belongs to the cytidine and deoxycytidylate deaminase family. ADAT2 subfamily. Requires Zn(2+) as cofactor.

The catalysed reaction is adenosine(34) in tRNA + H2O + H(+) = inosine(34) in tRNA + NH4(+). Probably participates in deamination of adenosine-34 to inosine in many tRNAs. In Homo sapiens (Human), this protein is tRNA-specific adenosine deaminase 2 (ADAT2).